Consider the following 268-residue polypeptide: Undecaprenyl-diphosphatase (268 aa).

The next 7 helical transmembrane spans lie at 47-67 (FAVL…FSKL), 85-105 (IGVL…GGLI), 109-129 (LFNP…LLWV), 144-164 (FPLP…FPGV), 184-204 (AAEF…VYDL), 217-237 (LIVA…VKTF), and 246-266 (FALF…ALAL).

Belongs to the UppP family.

The protein resides in the cell inner membrane. The enzyme catalyses di-trans,octa-cis-undecaprenyl diphosphate + H2O = di-trans,octa-cis-undecaprenyl phosphate + phosphate + H(+). Catalyzes the dephosphorylation of undecaprenyl diphosphate (UPP). Confers resistance to bacitracin. This Rhodopseudomonas palustris (strain BisA53) protein is Undecaprenyl-diphosphatase.